The sequence spans 548 residues: Ankyrin repeat domain-containing protein SOWAHA (548 aa).

The N-terminal stretch at 1–19 (MALAAAAAAAAAAAGVSQA) is a signal peptide. The segment at 114-212 (EDNCAPGAPH…PPTAQVPPQK (99 aa)) is disordered. The segment covering 136-153 (SAPSELQHTPETLPSEVT) has biased composition (polar residues). Pro residues predominate over residues 198–212 (GPEPAPPTAQVPPQK). Residue Ser-258 is modified to Phosphoserine. ANK repeat units follow at residues 344–373 (SGFT…RGGA) and 383–413 (GGYT…QVHV). Positions 512-548 (PRKKTKIRGGLPSFTEISHRSTPGPLAGLVPSLPPPT) are disordered.

Belongs to the SOWAH family.

This is Ankyrin repeat domain-containing protein SOWAHA (Sowaha) from Mus musculus (Mouse).